Consider the following 287-residue polypeptide: MTNPYIVAEGVSYAYGREEADGAAPVRLALDGVDLDVRRGEFLAILGMNGSGKSTLARHLNALLLPRAGRVLVDGLDTREEANLWSIRDRVGMVFQNPDNQIVAAVVEEDVAFGPENQGLPSAEIRARVAEALEAVGMSEHRERSPHLLSGGQKQRVAIAGALAMRPACLVLDEPTAMLDPSGRAEVLAVVRRLNRELGMTVVWITHFMDEAVVADRVVVMAEGRVQMVGTPREVFAQADRIRALRLDLPPAVQAAERLRAQGVPLPRTILTLDELVEALCQLYSRP.

One can recognise an ABC transporter domain in the interval 6-248; that stretch reads IVAEGVSYAY…ADRIRALRLD (243 aa). 47-54 serves as a coordination point for ATP; it reads GMNGSGKS.

This sequence belongs to the ABC transporter superfamily. Energy-coupling factor EcfA family. Forms a stable energy-coupling factor (ECF) transporter complex composed of 2 membrane-embedded substrate-binding proteins (S component), 2 ATP-binding proteins (A component) and 2 transmembrane proteins (T component).

Its subcellular location is the cell membrane. ATP-binding (A) component of a common energy-coupling factor (ECF) ABC-transporter complex. Unlike classic ABC transporters this ECF transporter provides the energy necessary to transport a number of different substrates. The sequence is that of Energy-coupling factor transporter ATP-binding protein EcfA1 from Symbiobacterium thermophilum (strain DSM 24528 / JCM 14929 / IAM 14863 / T).